The sequence spans 153 residues: MSERDAQGATDIEGIMNLLPHRYPLLLIDRVLDFQPHEHLASIKNVTINEPFFVGHFPQKPVMPGVLILESLAQACGMLAFKSVQDTLTDNDVLYLVGIDKARFKRPVQPGDQLRHDVSVRRVTRGIWIFEARGSVDGELAAECEIRCTVRTV.

Residue His-56 is part of the active site.

Belongs to the thioester dehydratase family. FabZ subfamily.

Its subcellular location is the cytoplasm. The enzyme catalyses a (3R)-hydroxyacyl-[ACP] = a (2E)-enoyl-[ACP] + H2O. In terms of biological role, involved in unsaturated fatty acids biosynthesis. Catalyzes the dehydration of short chain beta-hydroxyacyl-ACPs and long chain saturated and unsaturated beta-hydroxyacyl-ACPs. The protein is 3-hydroxyacyl-[acyl-carrier-protein] dehydratase FabZ of Halorhodospira halophila (strain DSM 244 / SL1) (Ectothiorhodospira halophila (strain DSM 244 / SL1)).